Reading from the N-terminus, the 357-residue chain is DNA replication and repair protein RecF (357 aa).

31–38 contacts ATP; sequence GQNGAGKT.

Belongs to the RecF family.

The protein localises to the cytoplasm. Its function is as follows. The RecF protein is involved in DNA metabolism; it is required for DNA replication and normal SOS inducibility. RecF binds preferentially to single-stranded, linear DNA. It also seems to bind ATP. The sequence is that of DNA replication and repair protein RecF from Coxiella burnetii (strain CbuG_Q212) (Coxiella burnetii (strain Q212)).